The chain runs to 210 residues: Mediator of RNA polymerase II transcription subunit 20 (210 aa).

This sequence belongs to the Mediator complex subunit 20 family. Component of the Mediator complex, which is composed of at least 21 subunits that form three structurally distinct submodules. The Mediator head module contains MED6, MED8, MED11, SRB4/MED17, SRB5/MED18, ROX3/MED19, SRB2/MED20 and SRB6/MED22, the middle module contains MED1, MED4, NUT1/MED5, MED7, CSE2/MED9, NUT2/MED10, SRB7/MED21 and SOH1/MED31, and the tail module contains MED2, PGD1/MED3, RGR1/MED14, GAL11/MED15 and SIN4/MED16. The head and the middle modules interact directly with RNA polymerase II, whereas the elongated tail module interacts with gene-specific regulatory proteins. MED1 interacts directly with MED4 and MED7. SRB2/MED20 interacts directly with SRB4/MED17 and SRB5/MED18.

The protein resides in the nucleus. Its function is as follows. Component of the Mediator complex, a coactivator involved in the regulated transcription of nearly all RNA polymerase II-dependent genes. Mediator functions as a bridge to convey information from gene-specific regulatory proteins to the basal RNA polymerase II transcription machinery. The Mediator complex, having a compact conformation in its free form, is recruited to promoters by direct interactions with regulatory proteins and serves for the assembly of a functional preinitiation complex with RNA polymerase II and the general transcription factors. The Mediator complex unfolds to an extended conformation and partially surrounds RNA polymerase II, specifically interacting with the unphosphorylated form of the C-terminal domain (CTD) of RNA polymerase II. The Mediator complex dissociates from the RNA polymerase II holoenzyme and stays at the promoter when transcriptional elongation begins. The protein is Mediator of RNA polymerase II transcription subunit 20 (SRB2) of Saccharomyces cerevisiae (strain ATCC 204508 / S288c) (Baker's yeast).